The chain runs to 282 residues: uncharacterized protein (282 aa).

Belongs to the ycf80 family.

The protein resides in the plastid. Its subcellular location is the chloroplast. This is an uncharacterized protein from Guillardia theta (Cryptophyte).